The chain runs to 240 residues: Uridylate kinase (240 aa).

Residue 12-15 (KLSG) coordinates ATP. An involved in allosteric activation by GTP region spans residues 20-25 (GDQGKG). A UMP-binding site is contributed by Gly-54. ATP contacts are provided by Gly-55 and Arg-59. UMP is bound by residues Asp-74 and 135-142 (TGSPYFST). Residues Asn-163, Tyr-169, and Asp-172 each contribute to the ATP site.

Belongs to the UMP kinase family. As to quaternary structure, homohexamer.

It is found in the cytoplasm. It catalyses the reaction UMP + ATP = UDP + ADP. It participates in pyrimidine metabolism; CTP biosynthesis via de novo pathway; UDP from UMP (UMPK route): step 1/1. Allosterically activated by GTP. Inhibited by UTP. Catalyzes the reversible phosphorylation of UMP to UDP. The chain is Uridylate kinase from Ligilactobacillus salivarius (strain UCC118) (Lactobacillus salivarius).